Here is a 294-residue protein sequence, read N- to C-terminus: Agamous-like MADS-box protein AGL82 (294 aa).

Positions 1-51 (MVPKVVDLQRIANDKTRITTYKKRKASLYKKAQEFSTLCGVETCLIVYGPT) constitute an MADS-box domain.

Interacts with MEE14/CBP1.

Its subcellular location is the nucleus. Its function is as follows. Probable transcription factor that may function in the maintenance of the proper function of the central cell in pollen tube attraction. The sequence is that of Agamous-like MADS-box protein AGL82 from Arabidopsis thaliana (Mouse-ear cress).